A 90-amino-acid chain; its full sequence is Small ribosomal subunit protein uS15 (90 aa).

It belongs to the universal ribosomal protein uS15 family. In terms of assembly, part of the 30S ribosomal subunit. Forms a bridge to the 50S subunit in the 70S ribosome, contacting the 23S rRNA.

In terms of biological role, one of the primary rRNA binding proteins, it binds directly to 16S rRNA where it helps nucleate assembly of the platform of the 30S subunit by binding and bridging several RNA helices of the 16S rRNA. Forms an intersubunit bridge (bridge B4) with the 23S rRNA of the 50S subunit in the ribosome. This is Small ribosomal subunit protein uS15 from Aquifex aeolicus (strain VF5).